We begin with the raw amino-acid sequence, 225 residues long: Uridylate kinase (225 aa).

Aspartate 6 is a Mg(2+) binding site. An ATP-binding site is contributed by 9–10 (GS). Glycine 44 is a binding site for UMP. Positions 45 and 49 each coordinate ATP. UMP contacts are provided by residues aspartate 66 and 114-120 (THPGHTT). Residues threonine 120 and aspartate 121 each contribute to the Mg(2+) site. Positions 140, 141, 146, and 149 each coordinate ATP. Glycine 179 is a binding site for UMP. Serine 182 lines the Mg(2+) pocket. Residue serine 182 coordinates ATP.

The protein belongs to the UMP kinase family. Homohexamer; trimer of dimers.

It is found in the cytoplasm. The enzyme catalyses UMP + ATP = UDP + ADP. The protein operates within pyrimidine metabolism; CTP biosynthesis via de novo pathway; UDP from UMP (UMPK route): step 1/1. Its activity is regulated as follows. Inhibited by UTP. Its function is as follows. Catalyzes the reversible phosphorylation of UMP to UDP, with ATP as the most efficient phosphate donor. In Pyrococcus furiosus (strain ATCC 43587 / DSM 3638 / JCM 8422 / Vc1), this protein is Uridylate kinase (pyrH).